Reading from the N-terminus, the 341-residue chain is Protein P3 (341 aa).

A disordered region spans residues 46 to 175 (RARQAANPVS…QTKNAPDANE (130 aa)). Over residues 97-116 (KSKRAVRREKRRTAAKKATN) the composition is skewed to basic residues. Low complexity predominate over residues 142 to 152 (SYLSSLLSSPS).

The protein belongs to the nepovirus protein P3 family.

This is Protein P3 from Vitis rupestris (Grape).